A 146-amino-acid chain; its full sequence is MAIYGIGTDVVQISRIAAVLERTGGRFAEKVLGPDELRVFHARRARSEARGIAFLATRFSAKEAFSKAIGLGMHWPMTWRALQTLNQRSGEPYVVASGELADWLAARGITARVTVSDERDYAVSFVVTETDAAPPPAPAPVSRTTS.

2 residues coordinate Mg(2+): Asp-9 and Glu-63.

It belongs to the P-Pant transferase superfamily. AcpS family. It depends on Mg(2+) as a cofactor.

It localises to the cytoplasm. The enzyme catalyses apo-[ACP] + CoA = holo-[ACP] + adenosine 3',5'-bisphosphate + H(+). Its function is as follows. Transfers the 4'-phosphopantetheine moiety from coenzyme A to a Ser of acyl-carrier-protein. The chain is Holo-[acyl-carrier-protein] synthase from Burkholderia ambifaria (strain ATCC BAA-244 / DSM 16087 / CCUG 44356 / LMG 19182 / AMMD) (Burkholderia cepacia (strain AMMD)).